We begin with the raw amino-acid sequence, 229 residues long: Peptidase E (229 aa).

Active-site charge relay system residues include S120, D135, and H157.

The protein belongs to the peptidase S51 family.

It localises to the cytoplasm. The enzyme catalyses Dipeptidase E catalyzes the hydrolysis of dipeptides Asp-|-Xaa. It does not act on peptides with N-terminal Glu, Asn or Gln, nor does it cleave isoaspartyl peptides.. Hydrolyzes dipeptides containing N-terminal aspartate residues. May play a role in allowing the cell to use peptide aspartate to spare carbon otherwise required for the synthesis of the aspartate family of amino acids. The protein is Peptidase E of Salmonella schwarzengrund (strain CVM19633).